The primary structure comprises 190 residues: Ganglioside GM2 activator (190 aa).

Residues 1–23 (MQSLMQAPVLIALGLLFAAPAQA) form the signal peptide. Intrachain disulfides connect Cys-36–Cys-180, Cys-96–Cys-103, Cys-109–Cys-135, and Cys-122–Cys-133. N-linked (GlcNAc...) asparagine glycosylation is present at Asn-60.

The protein localises to the lysosome. The enzyme catalyses cholesterol(in) = cholesterol(out). Its function is as follows. The large binding pocket can accommodate several single chain phospholipids and fatty acids, GM2A also exhibits some calcium-independent phospholipase activity. Binds gangliosides and stimulates ganglioside GM2 degradation. It stimulates only the breakdown of ganglioside GM2 and glycolipid GA2 by beta-hexosaminidase A. It extracts single GM2 molecules from membranes and presents them in soluble form to beta-hexosaminidase A for cleavage of N-acetyl-D-galactosamine and conversion to GM3. Has cholesterol transfer activity. This chain is Ganglioside GM2 activator (GM2A), found in Macaca fascicularis (Crab-eating macaque).